The primary structure comprises 55 residues: UPF0391 membrane protein RSp1666 (55 aa).

The next 2 membrane-spanning stretches (helical) occupy residues 5 to 25 (AVIFFIIALIAALFGFGGIAA) and 33 to 53 (ILFMIFVVLFVVSLFWGLVAG).

This sequence belongs to the UPF0391 family.

The protein resides in the cell membrane. The chain is UPF0391 membrane protein RSp1666 from Ralstonia nicotianae (strain ATCC BAA-1114 / GMI1000) (Ralstonia solanacearum).